Reading from the N-terminus, the 370-residue chain is Phosphoserine aminotransferase (370 aa).

An N-acetylmethionine modification is found at Met-1. The O-phospho-L-serine site is built by His-44 and Arg-45. At Lys-51 the chain carries N6-acetyllysine. Gly-79, Cys-80, and Trp-107 together coordinate pyridoxal 5'-phosphate. Lys-127 is subject to N6-acetyllysine. 3 residues coordinate pyridoxal 5'-phosphate: Thr-156, Asp-176, and Gln-199. Lys-200 is subject to N6-(pyridoxal phosphate)lysine. Asn-241 and Thr-242 together coordinate pyridoxal 5'-phosphate. N6-acetyllysine occurs at positions 269, 318, and 323. Ser-331 carries the phosphoserine modification. Lys-333 bears the N6-acetyllysine mark. Residues His-335, Arg-336, and Arg-342 each coordinate O-phospho-L-serine.

It belongs to the class-V pyridoxal-phosphate-dependent aminotransferase family. SerC subfamily. In terms of assembly, homodimer. Pyridoxal 5'-phosphate is required as a cofactor.

It carries out the reaction O-phospho-L-serine + 2-oxoglutarate = 3-phosphooxypyruvate + L-glutamate. It functions in the pathway amino-acid biosynthesis; L-serine biosynthesis; L-serine from 3-phospho-D-glycerate: step 2/3. Its function is as follows. Involved in L-serine biosynthesis via the phosphorylated pathway, a three-step pathway converting the glycolytic intermediate 3-phospho-D-glycerate into L-serine. Catalyzes the second step, that is the pyridoxal 5'-phosphate-dependent transamination of 3-phosphohydroxypyruvate and L-glutamate to O-phosphoserine (OPS) and alpha-ketoglutarate. This is Phosphoserine aminotransferase (PSAT1) from Oryctolagus cuniculus (Rabbit).